A 348-amino-acid polypeptide reads, in one-letter code: Keratocan (348 aa).

Positions 1–26 (MSRLNLTMEVLLVAFVAVFLTSQVHS) are cleaved as a signal peptide. Residues 40–69 (ACPKECNCPPNFPNAVYCDNKGLKSIPVIP) form the LRRNT domain. 2 cysteine pairs are disulfide-bonded: Cys-41-Cys-47 and Cys-45-Cys-57. LRR repeat units follow at residues 70–92 (PYTWYLYLQNNLIDVLSANALRN), 93–118 (ATQLKWINLNRNKITTEGLEVDALRA), 119–140 (MSNLVHLYMEDNLLSSIPSPLP), 141–163 (AKLEQLRLSRNKISKIPPGVFSG), 165–189 (GHLTLLDLQSNKLQDDAVTEVSLKG), 190–213 (LNNLIQINLAKNQLNSMPLGLPPT), 215–234 (TQIFLDGNNIEKIPAEYFKG), 235–260 (LPKVASLRLNRNKLANGGIPKNVFNL), 262–280 (SILDLQLSHNQLTEVPVIS), and 281–303 (SGLEHLHLDHNKIKSVNSSDICP). Residue Asn-92 is glycosylated (N-linked (GlcNAc...) (keratan sulfate) asparagine). Residue Asn-259 is glycosylated (N-linked (GlcNAc...) (keratan sulfate) asparagine). An N-linked (GlcNAc...) asparagine glycan is attached at Asn-297. Cys-302 and Cys-339 are disulfide-bonded.

Belongs to the small leucine-rich proteoglycan (SLRP) family. SLRP class II subfamily. Glycosylated. Contains keratan sulfate chains. Expressed in eye, where it is found in the corneal epithelial layer and to a lesser extent in the stromal layer (at protein level).

It localises to the secreted. Its subcellular location is the extracellular space. The protein localises to the extracellular matrix. Its function is as follows. May be important in developing and maintaining corneal transparency and for the structure of the stromal matrix. In Danio rerio (Zebrafish), this protein is Keratocan.